The following is a 1342-amino-acid chain: DNA-directed RNA polymerase subunit beta (1342 aa).

It belongs to the RNA polymerase beta chain family. As to quaternary structure, the RNAP catalytic core consists of 2 alpha, 1 beta, 1 beta' and 1 omega subunit. When a sigma factor is associated with the core the holoenzyme is formed, which can initiate transcription.

The catalysed reaction is RNA(n) + a ribonucleoside 5'-triphosphate = RNA(n+1) + diphosphate. Its function is as follows. DNA-dependent RNA polymerase catalyzes the transcription of DNA into RNA using the four ribonucleoside triphosphates as substrates. This Pseudoalteromonas atlantica (strain T6c / ATCC BAA-1087) protein is DNA-directed RNA polymerase subunit beta.